Here is a 291-residue protein sequence, read N- to C-terminus: Ribonuclease Z (291 aa).

Residues histidine 61, histidine 63, aspartate 65, histidine 66, histidine 133, aspartate 201, and histidine 257 each contribute to the Zn(2+) site. Aspartate 65 acts as the Proton acceptor in catalysis.

Belongs to the RNase Z family. In terms of assembly, homodimer. The cofactor is Zn(2+).

The catalysed reaction is Endonucleolytic cleavage of RNA, removing extra 3' nucleotides from tRNA precursor, generating 3' termini of tRNAs. A 3'-hydroxy group is left at the tRNA terminus and a 5'-phosphoryl group is left at the trailer molecule.. Its function is as follows. Zinc phosphodiesterase, which displays some tRNA 3'-processing endonuclease activity. Probably involved in tRNA maturation, by removing a 3'-trailer from precursor tRNA. This chain is Ribonuclease Z, found in Saccharolobus solfataricus (strain ATCC 35092 / DSM 1617 / JCM 11322 / P2) (Sulfolobus solfataricus).